A 265-amino-acid polypeptide reads, in one-letter code: Iron(3+)-hydroxamate import ATP-binding protein FhuC (265 aa).

Residues 12–248 (FALRNISFRV…ETLEMIYGIP (237 aa)) form the ABC transporter domain. ATP-binding positions include 44-51 (GHNGSGKS) and 168-179 (CLLLDEPTSALD).

It belongs to the ABC transporter superfamily. Iron (Fe3+)-hydroxamate importer (TC 3.A.1.14.7) family. The complex is composed of two ATP-binding proteins (FhuC), a transmembrane protein (FhuB) and a solute-binding protein (FhuD). FhuC interacts with FhuB.

Its subcellular location is the cell inner membrane. It carries out the reaction ATP + H2O + Fe(3+)-hydroxamate complex-[hydroxamate-binding protein]Side 1 = ADP + phosphate + Fe(3+)-hydroxamate complexSide 2 + [hydroxamate-binding protein]Side 1.. With respect to regulation, ATPase activity is inhibited by vanadate. Part of the ABC transporter complex FhuCDB involved in iron(3+)-hydroxamate import. Responsible for energy coupling to the transport system. The chain is Iron(3+)-hydroxamate import ATP-binding protein FhuC (fhuC) from Escherichia coli (strain K12).